Consider the following 206-residue polypeptide: Small ribosomal subunit protein uS4 (206 aa).

In terms of domain architecture, S4 RNA-binding spans 96–156 (GRLDNVVYRM…EKAKQQARIK (61 aa)).

This sequence belongs to the universal ribosomal protein uS4 family. As to quaternary structure, part of the 30S ribosomal subunit. Contacts protein S5. The interaction surface between S4 and S5 is involved in control of translational fidelity.

One of the primary rRNA binding proteins, it binds directly to 16S rRNA where it nucleates assembly of the body of the 30S subunit. Its function is as follows. With S5 and S12 plays an important role in translational accuracy. The protein is Small ribosomal subunit protein uS4 of Vibrio campbellii (strain ATCC BAA-1116).